A 297-amino-acid polypeptide reads, in one-letter code: HTH-type transcriptional regulator ArgP (297 aa).

The HTH lysR-type domain maps to 4-60; the sequence is PDYRTLQALDAVIRERGFERAAQKLCITQSAVSQRIKQLENTFGQPLLVRTVPPRPT. The segment at residues 21-40 is a DNA-binding region (H-T-H motif); sequence FERAAQKLCITQSAVSQRIK.

Belongs to the LysR transcriptional regulatory family. As to quaternary structure, homodimer.

In terms of biological role, controls the transcription of genes involved in arginine and lysine metabolism. In Cronobacter sakazakii (strain ATCC BAA-894) (Enterobacter sakazakii), this protein is HTH-type transcriptional regulator ArgP.